Consider the following 589-residue polypeptide: Phenylalanine--tRNA ligase beta subunit (589 aa).

The region spanning 302–379 is the B5 domain; that stretch reads LAYRKEMVRA…IAYGYNNIQM (78 aa). Mg(2+) contacts are provided by aspartate 357, aspartate 363, glutamate 366, and aspartate 367.

Belongs to the phenylalanyl-tRNA synthetase beta subunit family. Type 2 subfamily. As to quaternary structure, heterotetramer; dimer of two heterodimers formed by FARSA and FARSB. Requires Mg(2+) as cofactor.

The protein resides in the cytoplasm. It carries out the reaction tRNA(Phe) + L-phenylalanine + ATP = L-phenylalanyl-tRNA(Phe) + AMP + diphosphate + H(+). This is Phenylalanine--tRNA ligase beta subunit (FARSB) from Homo sapiens (Human).